The chain runs to 497 residues: ATP synthase subunit alpha, chloroplastic (497 aa).

170–177 serves as a coordination point for ATP; sequence GDRQTGKT.

The protein belongs to the ATPase alpha/beta chains family. F-type ATPases have 2 components, CF(1) - the catalytic core - and CF(0) - the membrane proton channel. CF(1) has five subunits: alpha(3), beta(3), gamma(1), delta(1), epsilon(1). CF(0) has four main subunits: a, b, b' and c.

It localises to the plastid. Its subcellular location is the chloroplast thylakoid membrane. The enzyme catalyses ATP + H2O + 4 H(+)(in) = ADP + phosphate + 5 H(+)(out). Produces ATP from ADP in the presence of a proton gradient across the membrane. The alpha chain is a regulatory subunit. This chain is ATP synthase subunit alpha, chloroplastic, found in Bigelowiella natans (Pedinomonas minutissima).